A 155-amino-acid chain; its full sequence is Transcriptional regulator MraZ (155 aa).

SpoVT-AbrB domains lie at 7 to 63 (REQH…EPSV) and 92 to 135 (LDQT…EPLR).

It belongs to the MraZ family. In terms of assembly, forms oligomers.

It is found in the cytoplasm. The protein localises to the nucleoid. The protein is Transcriptional regulator MraZ of Chlorobaculum tepidum (strain ATCC 49652 / DSM 12025 / NBRC 103806 / TLS) (Chlorobium tepidum).